The chain runs to 474 residues: Chromosomal replication initiator protein DnaA (474 aa).

The segment at 1–91 is domain I, interacts with DnaA modulators; sequence MSEELWQRCL…STRASTPAAS (91 aa). Residues 89 to 138 are disordered; that stretch reads AASYFNGSSSSSSNGPITTPAAAPAPRQPESDSRPQPTSLGGARKHRSNL. The tract at residues 91-136 is domain II; sequence SYFNGSSSSSSNGPITTPAAAPAPRQPESDSRPQPTSLGGARKHRS. Over residues 96 to 113 the composition is skewed to low complexity; sequence SSSSSSNGPITTPAAAPA. A domain III, AAA+ region region spans residues 137-354; it reads NLNTGFTFST…GALRRVIAHV (218 aa). Residues Gly182, Gly184, Lys185, and Thr186 each contribute to the ATP site. The segment at 355-474 is domain IV, binds dsDNA; the sequence is RFTGAQIDIG…YLNLLRTLTS (120 aa).

The protein belongs to the DnaA family. Oligomerizes as a right-handed, spiral filament on DNA at oriC.

It localises to the cytoplasm. In terms of biological role, plays an essential role in the initiation and regulation of chromosomal replication. ATP-DnaA binds to the origin of replication (oriC) to initiate formation of the DNA replication initiation complex once per cell cycle. Binds the DnaA box (a 9 base pair repeat at the origin) and separates the double-stranded (ds)DNA. Forms a right-handed helical filament on oriC DNA; dsDNA binds to the exterior of the filament while single-stranded (ss)DNA is stabiized in the filament's interior. The ATP-DnaA-oriC complex binds and stabilizes one strand of the AT-rich DNA unwinding element (DUE), permitting loading of DNA polymerase. After initiation quickly degrades to an ADP-DnaA complex that is not apt for DNA replication. Binds acidic phospholipids. In Alcanivorax borkumensis (strain ATCC 700651 / DSM 11573 / NCIMB 13689 / SK2), this protein is Chromosomal replication initiator protein DnaA.